The sequence spans 623 residues: Pyranose 2-oxidase (623 aa).

Residues 1-27 (MSTSSSDPFFNFTKSSFRSAAAQKASA) form the signal peptide. A propeptide spanning residues 28-38 (TSLPPLPGPDK) is cleaved from the precursor. H167 bears the Tele-8alpha-FAD histidine mark. Substrate-binding residues include Q448 and H450. The Proton acceptor role is filled by H548. Residue N593 is part of the active site.

It belongs to the GMC oxidoreductase family. Homotetramer. Requires FAD as cofactor. In terms of processing, not glycosylated.

It is found in the periplasm. The enzyme catalyses D-glucose + O2 = 2-dehydro-D-glucose + H2O2. Its function is as follows. Catalyzes the oxidation of various aldopyranoses and disaccharides on carbon-2 to the corresponding 2-keto sugars concomitant with the reduction of O(2) to H(2)O(2). Plays an important role in lignin degradation of wood rot fungi by supplying the essential cosubstrate H(2)O(2) for the ligninolytic peroxidases, lignin peroxidase and manganese-dependent peroxidase. The preferred substrate is D-glucose which is converted to 2-dehydro-D-glucose. Also acts on D-xylose, together with D-glucose the major sugars derived from wood, on L-sorbose, D-galactose and 1,5-anhydroglucitol, a diagnostic marker of diabetes mellitus. This is Pyranose 2-oxidase (P2OX) from Trametes versicolor (White-rot fungus).